Here is a 159-residue protein sequence, read N- to C-terminus: Protein hunchback (159 aa).

Residues 18-34 (HNHHHHHHHGHHQHQQR) are compositionally biased toward basic residues. Disordered regions lie at residues 18-49 (HNHHHHHHHGHHQHQQRHNSNSNASSPHQSPL) and 119-159 (LTPP…KYMA). Residues 140-159 (EPEKEHDLMSNSSEDMKYMA) are compositionally biased toward basic and acidic residues.

This sequence belongs to the hunchback C2H2-type zinc-finger protein family.

Its subcellular location is the nucleus. Its function is as follows. Gap class segmentation protein that controls development of head structures. This Drosophila soonae (Fruit fly) protein is Protein hunchback (hb).